The chain runs to 397 residues: UPF0597 protein Tmel_1007 (397 aa).

This sequence belongs to the UPF0597 family.

This is UPF0597 protein Tmel_1007 from Thermosipho melanesiensis (strain DSM 12029 / CIP 104789 / BI429).